The chain runs to 388 residues: Probable peptidoglycan glycosyltransferase FtsW (388 aa).

Topologically, residues 1–19 (MSAAAPKPRPAHRFHIDQT) are cytoplasmic. Residues 20–40 (LLSVCLCLLGIGFVMVASSSM) form a helical membrane-spanning segment. The Periplasmic segment spans residues 41–57 (HLGVKMADDVSYYPFKQ). Residues 58–78 (LVHIILGLMFAAAILAIPMKY) traverse the membrane as a helical segment. Over 79-85 (WQKIGQP) the chain is Cytoplasmic. The helical transmembrane segment at 86–106 (LFIVGLVLLLVVLIPGVGVKV) threads the bilayer. Residues 107-117 (NGSTRWLSLLG) lie on the Periplasmic side of the membrane. Residues 118-137 (LRIQVSEVMKFISVVYMAGY) form a helical membrane-spanning segment. Over 138-147 (ITRHSDHVRH) the chain is Cytoplasmic. The helical transmembrane segment at 148–168 (SIFGLLRPLMLLSVASILLLL) threads the bilayer. The Periplasmic segment spans residues 169-170 (EP). The chain crosses the membrane as a helical span at residues 171–191 (DFGSAVVILIIAMGMMFLGGA). A topological domain (cytoplasmic) is located at residue Arg192. Residues 193-213 (LSPFVALVALISSAGAILASS) form a helical membrane-spanning segment. Residues 214 to 271 (ADYRVKRMTSFLNPWEHARDSGYQLTQALISFGRGEVSGVGLGNGLQKLFYLPEAHTD) are Periplasmic-facing. The chain crosses the membrane as a helical span at residues 272 to 292 (FLFSVLGEELGLVGVTLVIAL). Residues 293–315 (FTTLVVRGFSIGEQAEAAGERFS) are Cytoplasmic-facing. A helical membrane pass occupies residues 316–336 (ALVAYGLVIWFGFQAFVNMGV). Over 337–348 (NMGILPTKGLTL) the chain is Periplasmic. Residues 349 to 369 (PLMSYGGGSMIVMCGAMAVLF) form a helical membrane-spanning segment. The Cytoplasmic segment spans residues 370–388 (RIHYEVTELHKSNIKGKSR).

This sequence belongs to the SEDS family. FtsW subfamily.

The protein localises to the cell inner membrane. The catalysed reaction is [GlcNAc-(1-&gt;4)-Mur2Ac(oyl-L-Ala-gamma-D-Glu-L-Lys-D-Ala-D-Ala)](n)-di-trans,octa-cis-undecaprenyl diphosphate + beta-D-GlcNAc-(1-&gt;4)-Mur2Ac(oyl-L-Ala-gamma-D-Glu-L-Lys-D-Ala-D-Ala)-di-trans,octa-cis-undecaprenyl diphosphate = [GlcNAc-(1-&gt;4)-Mur2Ac(oyl-L-Ala-gamma-D-Glu-L-Lys-D-Ala-D-Ala)](n+1)-di-trans,octa-cis-undecaprenyl diphosphate + di-trans,octa-cis-undecaprenyl diphosphate + H(+). It participates in cell wall biogenesis; peptidoglycan biosynthesis. Peptidoglycan polymerase that is essential for cell division. The polypeptide is Probable peptidoglycan glycosyltransferase FtsW (Methylomonas methanica (strain DSM 25384 / MC09)).